Consider the following 439-residue polypeptide: Adenylosuccinate synthetase (439 aa).

Residues 25–31 (GDEGKGK), 53–55 (GHT), and Lys-62 contribute to the GTP site. The active-site Proton acceptor is Asp-26. Residues Asp-26 and Gly-53 each contribute to the Mg(2+) site. Residues 26 to 29 (DEGK) and 51 to 54 (NAGH) contribute to the IMP site. His-54 functions as the Proton donor in the catalytic mechanism. Thr-141, Arg-155, Asn-232, and Thr-247 together coordinate IMP. GTP is bound at residue Thr-307. 307–313 (TTTKRPR) contributes to the substrate binding site. Residue Arg-311 coordinates IMP. GTP contacts are provided by residues Arg-313, 339–341 (KLD), and 425–427 (GVG).

Belongs to the adenylosuccinate synthetase family. Homodimer. Mg(2+) is required as a cofactor.

It is found in the cytoplasm. The catalysed reaction is IMP + L-aspartate + GTP = N(6)-(1,2-dicarboxyethyl)-AMP + GDP + phosphate + 2 H(+). Its pathway is purine metabolism; AMP biosynthesis via de novo pathway; AMP from IMP: step 1/2. In terms of biological role, plays an important role in the salvage pathway for purine nucleotide biosynthesis. Catalyzes the first commited step in the biosynthesis of AMP from IMP. The chain is Adenylosuccinate synthetase (ADSS) from Plasmodium berghei (strain Anka).